A 108-amino-acid polypeptide reads, in one-letter code: VQ motif-containing protein 10 (108 aa).

Residues phenylalanine 29–glycine 38 carry the VQ motif. Residues isoleucine 65 to threonine 85 form a disordered region. Positions histidine 73 to methionine 82 are enriched in gly residues.

As to quaternary structure, interacts with WRKY25, WRKY26 and WRKY33.

The protein resides in the nucleus. May modulate WRKY transcription factor activities. In Arabidopsis thaliana (Mouse-ear cress), this protein is VQ motif-containing protein 10.